The primary structure comprises 414 residues: MEKLVIVGAQWGDEGKGKIVDLLSKDYETAVRYQGGNNAGHTVIVEGKKYILHLVPTSILHKHTKGIIAQGMVIDLEVLSKEIKDLEVLDIENRLFISDRAHIILPYHKILDRLFEKKSNIGTTLKGIGPTYMMKYARKGIRMVDLKDEDIFFNRLEENLEFTKELCEKVYNERFELNKDEVAEDIFRLFKPIEKNIKNTFKIIQTSKSVIFEGAQGVMLDIDIGTYPYVTSSNSSTLGLSNGTGLHPKYFTDAKFVGVSKAYTTRVGAGPFPTELKDEIGDALRDFGHEYGSTTGRPRRCGWLDLVALKYACDTNGFDEIILTKLDVLDIFDEIKVCIAYENFEDFPSSLKDMENARPIYKTLKGWKATTKAARDKSKLPKEALDYIMFIEDYLNTKVSMLSTGPAREDYLYL.

Residues Gly-12 to Lys-18 and Gly-40 to Thr-42 each bind GTP. Asp-13 acts as the Proton acceptor in catalysis. Mg(2+)-binding residues include Asp-13 and Gly-40. IMP-binding positions include Asp-13–Lys-16, Asn-38–His-41, Thr-124, Arg-138, Gln-216, Thr-231, and Arg-297. His-41 acts as the Proton donor in catalysis. Ser-293 to Arg-299 contacts substrate. Residues Arg-299, Lys-325 to Asp-327, and Ser-403 to Gly-405 contribute to the GTP site.

The protein belongs to the adenylosuccinate synthetase family. Homodimer. Mg(2+) is required as a cofactor.

Its subcellular location is the cytoplasm. The enzyme catalyses IMP + L-aspartate + GTP = N(6)-(1,2-dicarboxyethyl)-AMP + GDP + phosphate + 2 H(+). It functions in the pathway purine metabolism; AMP biosynthesis via de novo pathway; AMP from IMP: step 1/2. Functionally, plays an important role in the de novo pathway of purine nucleotide biosynthesis. Catalyzes the first committed step in the biosynthesis of AMP from IMP. The polypeptide is Adenylosuccinate synthetase (Hydrogenobaculum sp. (strain Y04AAS1)).